We begin with the raw amino-acid sequence, 125 residues long: Small ribosomal subunit protein uS12 (125 aa).

D89 carries the post-translational modification 3-methylthioaspartic acid. Positions 100 to 125 (GSLDTQGVQNRKQARSKYGAKRPKKA) are disordered. Over residues 111-125 (KQARSKYGAKRPKKA) the composition is skewed to basic residues.

It belongs to the universal ribosomal protein uS12 family. Part of the 30S ribosomal subunit. Contacts proteins S8 and S17. May interact with IF1 in the 30S initiation complex.

Functionally, with S4 and S5 plays an important role in translational accuracy. Interacts with and stabilizes bases of the 16S rRNA that are involved in tRNA selection in the A site and with the mRNA backbone. Located at the interface of the 30S and 50S subunits, it traverses the body of the 30S subunit contacting proteins on the other side and probably holding the rRNA structure together. The combined cluster of proteins S8, S12 and S17 appears to hold together the shoulder and platform of the 30S subunit. The sequence is that of Small ribosomal subunit protein uS12 from Thioalkalivibrio sulfidiphilus (strain HL-EbGR7).